Reading from the N-terminus, the 54-residue chain is Small polypeptide DEVIL 12 (54 aa).

The tract at residues 20 to 51 (NNKLTPNRSLKETRSRLYIIRRCLVMLLCWRE) is required for DVL/RTFL small polypeptide activity. Asn-26 carries an N-linked (GlcNAc...) asparagine glycan. Residues 31 to 48 (ETRSRLYIIRRCLVMLLC) form a helical membrane-spanning segment.

This sequence belongs to the DVL/RTFL small polypeptides family.

The protein localises to the cell membrane. Small polypeptide acting as a regulatory molecule which coordinates cellular responses required for differentiation, growth and development, probably by restricting polar cell proliferation in lateral organs and coordinating socket cell recruitment and differentiation at trichome sites. In Arabidopsis thaliana (Mouse-ear cress), this protein is Small polypeptide DEVIL 12.